A 314-amino-acid polypeptide reads, in one-letter code: Ferric-anguibactin transport system permease protein FatD (314 aa).

A run of 10 helical transmembrane segments spans residues 1-21, 49-69, 76-96, 103-123, 132-152, 180-200, 207-226, 230-252, 265-285, and 288-308; these read MTFR…FFGA, VALI…QHIV, PGTT…IVML, ERMF…IAII, ALVP…AEFY, IIFL…RFTV, IASN…LILV, VAVT…NLVA, IVAL…RVVL, and FEVP…LAFL.

Belongs to the binding-protein-dependent transport system permease family. FecCD subfamily. Part of an iron transport system composed of the outer membrane receptor FatA, the periplasmic binding protein FatB and the inner membrane proteins FatC and FatD.

Its subcellular location is the cell inner membrane. Functionally, involved in the uptake of iron in complex with the siderophore anguibactin. Responsible for the translocation of ferric-anguibactin across the cytoplasmic membrane. In Vibrio anguillarum (strain ATCC 68554 / 775) (Listonella anguillarum), this protein is Ferric-anguibactin transport system permease protein FatD.